Consider the following 149-residue polypeptide: Oligosaccharyltransferase complex subunit ostc-A (149 aa).

The Cytoplasmic portion of the chain corresponds to 1–32; it reads MESLYRVPFTVLECPNLKLKKPSWLHMPSAMT. The helical transmembrane segment at 33–53 threads the bilayer; sequence VYAMVVVSYFLITGGIIYDVI. At 54–83 the chain is on the extracellular side; the sequence is VEPPSVGSMTDEHGHQRPVAFLAYRVNGQY. The helical transmembrane segment at 84–104 threads the bilayer; the sequence is IMEGLASSFLFTMGGLGFIIL. Residues 105 to 117 lie on the Cytoplasmic side of the membrane; it reads DRSNTPNIPKLNR. A helical transmembrane segment spans residues 118–138; sequence FLLLFIGFVCVLLSFFMARVF. The Extracellular portion of the chain corresponds to 139-149; that stretch reads MRMKLPGYLMG.

It belongs to the OSTC family. Specific component of the STT3A-containing form of the oligosaccharyltransferase (OST) complex.

It localises to the membrane. It functions in the pathway protein modification; protein glycosylation. In terms of biological role, specific component of the STT3A-containing form of the oligosaccharyl transferase (OST) complex that catalyzes the initial transfer of a defined glycan (Glc(3)Man(9)GlcNAc(2) in eukaryotes) from the lipid carrier dolichol-pyrophosphate to an asparagine residue within an Asn-X-Ser/Thr consensus motif in nascent polypeptide chains, the first step in protein N-glycosylation. N-glycosylation occurs cotranslationally and the complex associates with the Sec61 complex at the channel-forming translocon complex that mediates protein translocation across the endoplasmic reticulum (ER). All subunits are required for a maximal enzyme activity. In Xenopus laevis (African clawed frog), this protein is Oligosaccharyltransferase complex subunit ostc-A.